The chain runs to 188 residues: Peptide methionine sulfoxide reductase MsrA (188 aa).

The disordered stretch occupies residues 1–25 (MEGNEKAEQKNATSEESTDIFENPG). The active site involves Cys37.

Belongs to the MsrA Met sulfoxide reductase family.

It carries out the reaction L-methionyl-[protein] + [thioredoxin]-disulfide + H2O = L-methionyl-(S)-S-oxide-[protein] + [thioredoxin]-dithiol. The enzyme catalyses [thioredoxin]-disulfide + L-methionine + H2O = L-methionine (S)-S-oxide + [thioredoxin]-dithiol. Its function is as follows. Has an important function as a repair enzyme for proteins that have been inactivated by oxidation. Catalyzes the reversible oxidation-reduction of methionine sulfoxide in proteins to methionine. The chain is Peptide methionine sulfoxide reductase MsrA from Methanosarcina acetivorans (strain ATCC 35395 / DSM 2834 / JCM 12185 / C2A).